A 358-amino-acid chain; its full sequence is ATP-dependent (S)-NAD(P)H-hydrate dehydratase (358 aa).

The 292-residue stretch at 63-354 (LLQSAKNVIP…QQIHQAFEEL (292 aa)) folds into the YjeF C-terminal domain. (6S)-NADPHX contacts are provided by residues glycine 163 and 220–226 (NVVEFDR). ATP-binding positions include 261–265 (KGQHD) and 280–289 (GSNRRCGGQG). Aspartate 290 lines the (6S)-NADPHX pocket.

This sequence belongs to the NnrD/CARKD family. Mg(2+) serves as cofactor.

The enzyme catalyses (6S)-NADHX + ATP = ADP + phosphate + NADH + H(+). It catalyses the reaction (6S)-NADPHX + ATP = ADP + phosphate + NADPH + H(+). Functionally, catalyzes the dehydration of the S-form of NAD(P)HX at the expense of ATP, which is converted to ADP. Together with NAD(P)HX epimerase, which catalyzes the epimerization of the S- and R-forms, the enzyme allows the repair of both epimers of NAD(P)HX, a damaged form of NAD(P)H that is a result of enzymatic or heat-dependent hydration. The sequence is that of ATP-dependent (S)-NAD(P)H-hydrate dehydratase from Nematostella vectensis (Starlet sea anemone).